The following is a 237-amino-acid chain: Myb-related protein MYBAS1 (237 aa).

HTH myb-type domains lie at 5–57 (REEM…VNYL) and 58–112 (HPGL…RKKA). A DNA-binding region (H-T-H motif) is located at residues 33 to 57 (WDFVAKVSGLNRTGKSCRLRWVNYL). A Bipartite nuclear localization signal 1 motif is present at residues 62 to 65 (KHGR). Residues 85 to 108 (WSRIARRLPGRTDNEIKNYWRTHM) constitute a DNA-binding region (H-T-H motif). Residues 109 to 117 (RKKAQERRG) carry the Bipartite nuclear localization signal 2 motif.

The protein localises to the nucleus. Its function is as follows. Transcription factor. The chain is Myb-related protein MYBAS1 (MYBAS1) from Oryza sativa subsp. japonica (Rice).